We begin with the raw amino-acid sequence, 118 residues long: Secreted effector CSEP0064 (118 aa).

The first 21 residues, 1 to 21, serve as a signal peptide directing secretion; that stretch reads MRPFQLLSALAIFINLEAVEA. Cysteines 27 and 113 form a disulfide.

As to quaternary structure, interacts in planta with the pathogenesis-related protein PR10.

The protein localises to the secreted. It localises to the host cell. In terms of biological role, secreted effector that increases susceptibility to infection in both monocotyledonous and dicotyledonous plants. Non-catalytic homolog of fungal RNases that binds host RNA and inhibits the degradation of host ribosomal RNA induced by ribosome-inactivating proteins (RIPs), preventing host cell death, an inviable interaction and demise of the fungus. The polypeptide is Secreted effector CSEP0064 (Blumeria graminis f. sp. hordei (strain DH14) (Barley powdery mildew)).